Reading from the N-terminus, the 418-residue chain is UDP-N-acetylglucosamine 1-carboxyvinyltransferase 2 (418 aa).

22–23 (KN) contributes to the phosphoenolpyruvate binding site. R93 is a binding site for UDP-N-acetyl-alpha-D-glucosamine. C117 (proton donor) is an active-site residue. C117 is subject to 2-(S-cysteinyl)pyruvic acid O-phosphothioketal. Residues 122–126 (RPIDQ), D305, and I327 each bind UDP-N-acetyl-alpha-D-glucosamine.

It belongs to the EPSP synthase family. MurA subfamily.

The protein localises to the cytoplasm. The enzyme catalyses phosphoenolpyruvate + UDP-N-acetyl-alpha-D-glucosamine = UDP-N-acetyl-3-O-(1-carboxyvinyl)-alpha-D-glucosamine + phosphate. Its pathway is cell wall biogenesis; peptidoglycan biosynthesis. Cell wall formation. Adds enolpyruvyl to UDP-N-acetylglucosamine. This chain is UDP-N-acetylglucosamine 1-carboxyvinyltransferase 2, found in Clostridium acetobutylicum (strain ATCC 824 / DSM 792 / JCM 1419 / IAM 19013 / LMG 5710 / NBRC 13948 / NRRL B-527 / VKM B-1787 / 2291 / W).